A 36-amino-acid polypeptide reads, in one-letter code: uncharacterized protein (36 aa).

The helical transmembrane segment at 13–35 (SVILSPFPCCVLKSYLTVIYISF) threads the bilayer.

The protein localises to the host membrane. This is an uncharacterized protein from Pseudoalteromonas espejiana (Bacteriophage PM2).